Here is a 292-residue protein sequence, read N- to C-terminus: MASLKDMRVRIASTKATQKITKAMQMVAASKLRRAQNAAEAARPYAEKMDTVISNIASAAAGSPNASPLLAGTGKDQVHLLLVCTGERGLSGAFNSAIVRLARDRAFALMNQGKEVKFFCVGRKGYEQLRRIFEKQIVETVELRTVRQLGFVNAEDIARKVLARFDAGEFDVCTLFYSRFQSVIAQVPTAQQVIPLAVEDAARSDGPAPSYEYEPEEDEILNGLLPRNLAVQIFRALLENNASFYGAQMTAMDNATRNAGEMIRKQTLIYNRTRQAMITKELIEIISGAEAV.

This sequence belongs to the ATPase gamma chain family. As to quaternary structure, F-type ATPases have 2 components, CF(1) - the catalytic core - and CF(0) - the membrane proton channel. CF(1) has five subunits: alpha(3), beta(3), gamma(1), delta(1), epsilon(1). CF(0) has three main subunits: a, b and c.

It localises to the cell inner membrane. Functionally, produces ATP from ADP in the presence of a proton gradient across the membrane. The gamma chain is believed to be important in regulating ATPase activity and the flow of protons through the CF(0) complex. The sequence is that of ATP synthase gamma chain from Nitrobacter winogradskyi (strain ATCC 25391 / DSM 10237 / CIP 104748 / NCIMB 11846 / Nb-255).